A 363-amino-acid polypeptide reads, in one-letter code: 3,4-dihydroxy-2-butanone 4-phosphate synthase (363 aa).

Residues 1 to 202 (MSHISPIPEI…IADLIEYRSR (202 aa)) form a DHBP synthase region. D-ribulose 5-phosphate is bound by residues 28 to 29 (RE), aspartate 33, 141 to 145 (RAGHT), and glutamate 165. Glutamate 29 is a binding site for Mg(2+). Residue histidine 144 coordinates Mg(2+). Residues 205 to 363 (SLLEDMGNAP…EVVGFEEAEK (159 aa)) form a GTP cyclohydrolase II-like region.

The protein in the N-terminal section; belongs to the DHBP synthase family. It in the C-terminal section; belongs to the GTP cyclohydrolase II family. It depends on Mg(2+) as a cofactor. Mn(2+) serves as cofactor.

The catalysed reaction is D-ribulose 5-phosphate = (2S)-2-hydroxy-3-oxobutyl phosphate + formate + H(+). Its pathway is cofactor biosynthesis; riboflavin biosynthesis; 2-hydroxy-3-oxobutyl phosphate from D-ribulose 5-phosphate: step 1/1. Functionally, catalyzes the conversion of D-ribulose 5-phosphate to formate and 3,4-dihydroxy-2-butanone 4-phosphate. In Neisseria meningitidis serogroup B (strain ATCC BAA-335 / MC58), this protein is 3,4-dihydroxy-2-butanone 4-phosphate synthase (ribB).